Consider the following 263-residue polypeptide: Ribosome maturation factor RimP (263 aa).

Residues Glu192 to Glu263 form a disordered region. A compositionally biased stretch (basic residues) spans Pro217–Ala231. The span at Lys232–Ile257 shows a compositional bias: basic and acidic residues.

It belongs to the RimP family.

It is found in the cytoplasm. In terms of biological role, required for maturation of 30S ribosomal subunits. The protein is Ribosome maturation factor RimP of Nitrobacter hamburgensis (strain DSM 10229 / NCIMB 13809 / X14).